The primary structure comprises 367 residues: E3 ubiquitin-protein ligase RGLG3 (367 aa).

Residues Asn37–Leu257 form the VWFA domain. An RING-type zinc finger spans residues Cys323–Arg356.

As to quaternary structure, interacts with UBC30, GRXS17 and GLB3. Binds to and coactivates GAF1/IDD2 and ENY/IDD1. As to expression, widely expressed.

It is found in the cytoplasm. The protein localises to the nucleus. The catalysed reaction is S-ubiquitinyl-[E2 ubiquitin-conjugating enzyme]-L-cysteine + [acceptor protein]-L-lysine = [E2 ubiquitin-conjugating enzyme]-L-cysteine + N(6)-ubiquitinyl-[acceptor protein]-L-lysine.. Functionally, possesses E3 ubiquitin-protein ligase in vitro. Acts as upstream modulator of jasmonate (JA) signaling in response to various stimuli, such as JA-inhibited root growth, JA-inductive gene expression, coronatine-mediated pathogen susceptibility, wound-stimulated expression of JA-responsive genes and wound-induced JA biosynthesis. Controls fumonisin B1 (FB1)-triggered programmed cell death (PCD) by modulating the JA signaling pathway. May mediate salicylic acid (SA) suppression of JA signaling in FB1-induced responses. May mediate the formation of 'Lys-48'-linked multiubiquitin chains. Mediates the polyubiquitination and subsequent proteasomal degradation of the target protein GRXS17. The sequence is that of E3 ubiquitin-protein ligase RGLG3 from Arabidopsis thaliana (Mouse-ear cress).